Here is a 134-residue protein sequence, read N- to C-terminus: Acyl carrier protein, chloroplastic (134 aa).

A chloroplast-targeting transit peptide spans 1 to 51 (MSTTFCSSVSMQATSLAATTRISFQKPALVSRTNLSFNLSRSIPTRLSVSC). The Carrier domain occupies 55–130 (PETVEKVSKI…EAAELIDELV (76 aa)). Ser-90 carries the O-(pantetheine 4'-phosphoryl)serine modification.

This sequence belongs to the acyl carrier protein (ACP) family. 4'-phosphopantetheine is transferred from CoA to a specific serine of apo-ACP by acpS. This modification is essential for activity because fatty acids are bound in thioester linkage to the sulfhydryl of the prosthetic group. In terms of tissue distribution, seed.

It is found in the plastid. Its subcellular location is the chloroplast. Its pathway is lipid metabolism; fatty acid biosynthesis. Carrier of the growing fatty acid chain in fatty acid biosynthesis. The polypeptide is Acyl carrier protein, chloroplastic (ACL1.A1) (Brassica napus (Rape)).